The following is an 81-amino-acid chain: Large ribosomal subunit protein bL28 (81 aa).

The protein belongs to the bacterial ribosomal protein bL28 family.

The protein is Large ribosomal subunit protein bL28 of Gloeobacter violaceus (strain ATCC 29082 / PCC 7421).